Consider the following 596-residue polypeptide: Proline--tRNA ligase (596 aa).

It belongs to the class-II aminoacyl-tRNA synthetase family. ProS type 1 subfamily. In terms of assembly, homodimer.

The protein resides in the cytoplasm. The enzyme catalyses tRNA(Pro) + L-proline + ATP = L-prolyl-tRNA(Pro) + AMP + diphosphate. In terms of biological role, catalyzes the attachment of proline to tRNA(Pro) in a two-step reaction: proline is first activated by ATP to form Pro-AMP and then transferred to the acceptor end of tRNA(Pro). As ProRS can inadvertently accommodate and process non-cognate amino acids such as alanine and cysteine, to avoid such errors it has two additional distinct editing activities against alanine. One activity is designated as 'pretransfer' editing and involves the tRNA(Pro)-independent hydrolysis of activated Ala-AMP. The other activity is designated 'posttransfer' editing and involves deacylation of mischarged Ala-tRNA(Pro). The misacylated Cys-tRNA(Pro) is not edited by ProRS. In Prochlorococcus marinus (strain NATL2A), this protein is Proline--tRNA ligase.